We begin with the raw amino-acid sequence, 137 residues long: ATP synthase epsilon chain (137 aa).

Belongs to the ATPase epsilon chain family. F-type ATPases have 2 components, CF(1) - the catalytic core - and CF(0) - the membrane proton channel. CF(1) has five subunits: alpha(3), beta(3), gamma(1), delta(1), epsilon(1). CF(0) has three main subunits: a, b and c.

The protein localises to the cell inner membrane. Functionally, produces ATP from ADP in the presence of a proton gradient across the membrane. This is ATP synthase epsilon chain from Magnetococcus marinus (strain ATCC BAA-1437 / JCM 17883 / MC-1).